The primary structure comprises 179 residues: MSRIGKNPVPVPDKVTVSLDGLTVKVKGPKGELERTLPDGVSVSQDNNCIVVAPSTSKRFSRERHGLCRTLVANMIEGVNNGYSKSLEIVGVGSRAQVKGKTLVVSAGYSHPVEMEPPEGITFKVENNTKVIVSGIDKELVGNEAAKVRAIRPPEPYKGKGIKYEGERIMRKAGKSGKK.

Belongs to the universal ribosomal protein uL6 family. Part of the 50S ribosomal subunit.

In terms of biological role, this protein binds to the 23S rRNA, and is important in its secondary structure. It is located near the subunit interface in the base of the L7/L12 stalk, and near the tRNA binding site of the peptidyltransferase center. The protein is Large ribosomal subunit protein uL6 of Parasynechococcus marenigrum (strain WH8102).